Consider the following 394-residue polypeptide: 1-deoxy-D-xylulose 5-phosphate reductoisomerase (394 aa).

Positions 12, 13, 14, 15, 38, 41, and 132 each coordinate NADPH. K133 is a 1-deoxy-D-xylulose 5-phosphate binding site. E134 contacts NADPH. D156 contacts Mn(2+). Positions 157, 158, 182, and 205 each coordinate 1-deoxy-D-xylulose 5-phosphate. E158 lines the Mn(2+) pocket. G211 provides a ligand contact to NADPH. 1-deoxy-D-xylulose 5-phosphate-binding residues include S218, N223, K224, and E227. E227 contributes to the Mn(2+) binding site.

Belongs to the DXR family. Mg(2+) is required as a cofactor. Requires Mn(2+) as cofactor.

The catalysed reaction is 2-C-methyl-D-erythritol 4-phosphate + NADP(+) = 1-deoxy-D-xylulose 5-phosphate + NADPH + H(+). The protein operates within isoprenoid biosynthesis; isopentenyl diphosphate biosynthesis via DXP pathway; isopentenyl diphosphate from 1-deoxy-D-xylulose 5-phosphate: step 1/6. In terms of biological role, catalyzes the NADPH-dependent rearrangement and reduction of 1-deoxy-D-xylulose-5-phosphate (DXP) to 2-C-methyl-D-erythritol 4-phosphate (MEP). This is 1-deoxy-D-xylulose 5-phosphate reductoisomerase from Arthrobacter sp. (strain FB24).